Consider the following 793-residue polypeptide: Probable phosphoketolase 2 (793 aa).

This sequence belongs to the XFP family. The cofactor is thiamine diphosphate.

This Nostoc sp. (strain PCC 7120 / SAG 25.82 / UTEX 2576) protein is Probable phosphoketolase 2.